The primary structure comprises 351 residues: Translation initiation factor eIF2B subunit beta (351 aa).

The protein belongs to the eIF-2B alpha/beta/delta subunits family. Component of the translation initiation factor 2B (eIF2B) complex which is a heterodecamer of two sets of five different subunits: alpha, beta, gamma, delta and epsilon. Subunits alpha, beta and delta comprise a regulatory subcomplex and subunits epsilon and gamma comprise a catalytic subcomplex. Within the complex, the hexameric regulatory complex resides at the center, with the two heterodimeric catalytic subcomplexes bound on opposite sides.

It is found in the cytoplasm. Its subcellular location is the cytosol. Activated by the chemical integrated stress response (ISR) inhibitor ISRIB which stimulates guanine nucleotide exchange factor activity for both phosphorylated and unphosphorylated eIF2. Acts as a component of the translation initiation factor 2B (eIF2B) complex, which catalyzes the exchange of GDP for GTP on eukaryotic initiation factor 2 (eIF2) gamma subunit. Its guanine nucleotide exchange factor activity is repressed when bound to eIF2 complex phosphorylated on the alpha subunit, thereby limiting the amount of methionyl-initiator methionine tRNA available to the ribosome and consequently global translation is repressed. This Mus musculus (Mouse) protein is Translation initiation factor eIF2B subunit beta (Eif2b2).